We begin with the raw amino-acid sequence, 961 residues long: ATPase 7, plasma membrane-type (961 aa).

Topologically, residues 1–64 (MTDIEALKAI…EKKESKILKF (64 aa)) are cytoplasmic. A helical transmembrane segment spans residues 65–84 (LGFMWNPLSWVMEAAALMAI). At 85–96 (GLAHGGGKPADY) the chain is on the extracellular side. A helical transmembrane segment spans residues 97-117 (HDFVGIVVLLLINSTISFVEE). At 118–246 (NNAGNAAAAL…GHFQKVLTAI (129 aa)) the chain is on the cytoplasmic side. Residues 247-267 (GNFCICSIAVGMAIEIVVIYG) form a helical membrane-spanning segment. At 268-276 (LQKRGYRVG) the chain is on the extracellular side. A helical membrane pass occupies residues 277 to 294 (IDNLLVLLIGGIPIAMPT). Over 295-643 (VLSVTMAIGA…TSRAIFQRMK (349 aa)) the chain is Cytoplasmic. Asp-332 functions as the 4-aspartylphosphate intermediate in the catalytic mechanism. Positions 588 and 592 each coordinate Mg(2+). Residues 644-665 (NYTIYAVSITIRIVMGFMLLCV) traverse the membrane as a helical segment. Residues 666–670 (FWEFD) are Extracellular-facing. The chain crosses the membrane as a helical span at residues 671–693 (FPPFMVLVIAILNDGTIMTISKD). At 694-709 (RVKPSPTPDCWKLKEI) the chain is on the cytoplasmic side. The chain crosses the membrane as a helical span at residues 710-730 (FATGVVLGAYLAIMTVVFFWA). At 731 to 764 (AYETNFFHNIFHVRNFNQHHFKMKDKKVAAHLNE) the chain is on the extracellular side. The helical transmembrane segment at 765 to 785 (QMASAVYLQVSTISQALIFVT) threads the bilayer. Over 786-797 (RSRSWSFVERPG) the chain is Cytoplasmic. The helical transmembrane segment at 798–818 (FLLVIAFLIAQLVASVISAMA) threads the bilayer. The Extracellular segment spans residues 819–826 (NWPFAGIR). A helical membrane pass occupies residues 827-847 (SIGWGWTGVIWIFNIVTYMLL). Topologically, residues 848–961 (DPIKFLVRYA…EDPNSNNYTI (114 aa)) are cytoplasmic. Thr-894 is modified (phosphothreonine). Phosphoserine occurs at positions 910 and 942. Residues 959 to 961 (YTI) are interaction with 14-3-3 proteins. Thr-960 carries the phosphothreonine modification.

It belongs to the cation transport ATPase (P-type) (TC 3.A.3) family. Type IIIA subfamily. As to quaternary structure, binds to 14-3-3 proteins. The binding is induced by phosphorylation of Thr-960. Binding to 14-3-3 proteins activates the H(+)-ATPase. As to expression, expressed in guard cells, roots and leaves, and barely in mesophyll cells.

The protein localises to the membrane. It carries out the reaction ATP + H2O + H(+)(in) = ADP + phosphate + 2 H(+)(out). In terms of biological role, the plasma membrane H(+) ATPase of plants and fungi generates a proton gradient that drives the active transport of nutrients by H(+)-symport. The resulting external acidification and/or internal alkinization may mediate growth responses. This chain is ATPase 7, plasma membrane-type (AHA7), found in Arabidopsis thaliana (Mouse-ear cress).